The sequence spans 456 residues: Bifunctional protein GlmU (456 aa).

A pyrophosphorylase region spans residues 1 to 229 (MLNNAMSVVI…LSEVEGVNNR (229 aa)). UDP-N-acetyl-alpha-D-glucosamine-binding positions include 11-14 (LAAG), Lys-25, Gln-76, 81-82 (GT), 103-105 (YGD), Gly-140, Glu-154, Asn-169, and Asn-227. Position 105 (Asp-105) interacts with Mg(2+). Position 227 (Asn-227) interacts with Mg(2+). The tract at residues 230–250 (LQLSRLERVYQSEQAEKLLLA) is linker. Positions 251–456 (GVMLRDPARF…EGWRRPVKKK (206 aa)) are N-acetyltransferase. The UDP-N-acetyl-alpha-D-glucosamine site is built by Arg-333 and Lys-351. His-363 (proton acceptor) is an active-site residue. UDP-N-acetyl-alpha-D-glucosamine is bound by residues Tyr-366 and Asn-377. Acetyl-CoA contacts are provided by residues Ala-380, 386-387 (NY), Ser-405, Ala-423, and Arg-440.

In the N-terminal section; belongs to the N-acetylglucosamine-1-phosphate uridyltransferase family. The protein in the C-terminal section; belongs to the transferase hexapeptide repeat family. In terms of assembly, homotrimer. The cofactor is Mg(2+).

The protein localises to the cytoplasm. It catalyses the reaction alpha-D-glucosamine 1-phosphate + acetyl-CoA = N-acetyl-alpha-D-glucosamine 1-phosphate + CoA + H(+). It carries out the reaction N-acetyl-alpha-D-glucosamine 1-phosphate + UTP + H(+) = UDP-N-acetyl-alpha-D-glucosamine + diphosphate. The protein operates within nucleotide-sugar biosynthesis; UDP-N-acetyl-alpha-D-glucosamine biosynthesis; N-acetyl-alpha-D-glucosamine 1-phosphate from alpha-D-glucosamine 6-phosphate (route II): step 2/2. It participates in nucleotide-sugar biosynthesis; UDP-N-acetyl-alpha-D-glucosamine biosynthesis; UDP-N-acetyl-alpha-D-glucosamine from N-acetyl-alpha-D-glucosamine 1-phosphate: step 1/1. Its pathway is bacterial outer membrane biogenesis; LPS lipid A biosynthesis. Functionally, catalyzes the last two sequential reactions in the de novo biosynthetic pathway for UDP-N-acetylglucosamine (UDP-GlcNAc). The C-terminal domain catalyzes the transfer of acetyl group from acetyl coenzyme A to glucosamine-1-phosphate (GlcN-1-P) to produce N-acetylglucosamine-1-phosphate (GlcNAc-1-P), which is converted into UDP-GlcNAc by the transfer of uridine 5-monophosphate (from uridine 5-triphosphate), a reaction catalyzed by the N-terminal domain. This chain is Bifunctional protein GlmU, found in Escherichia coli O139:H28 (strain E24377A / ETEC).